A 236-amino-acid chain; its full sequence is uncharacterized protein (236 aa).

This is an uncharacterized protein from Aquifex aeolicus (strain VF5).